A 156-amino-acid chain; its full sequence is SsrA-binding protein (156 aa).

It belongs to the SmpB family.

Its subcellular location is the cytoplasm. Required for rescue of stalled ribosomes mediated by trans-translation. Binds to transfer-messenger RNA (tmRNA), required for stable association of tmRNA with ribosomes. tmRNA and SmpB together mimic tRNA shape, replacing the anticodon stem-loop with SmpB. tmRNA is encoded by the ssrA gene; the 2 termini fold to resemble tRNA(Ala) and it encodes a 'tag peptide', a short internal open reading frame. During trans-translation Ala-aminoacylated tmRNA acts like a tRNA, entering the A-site of stalled ribosomes, displacing the stalled mRNA. The ribosome then switches to translate the ORF on the tmRNA; the nascent peptide is terminated with the 'tag peptide' encoded by the tmRNA and targeted for degradation. The ribosome is freed to recommence translation, which seems to be the essential function of trans-translation. In Bacillus velezensis (strain DSM 23117 / BGSC 10A6 / LMG 26770 / FZB42) (Bacillus amyloliquefaciens subsp. plantarum), this protein is SsrA-binding protein.